Here is a 222-residue protein sequence, read N- to C-terminus: Protein GrpE (222 aa).

Positions 1-21 (MSDEKNKFTDASFENCDLKNP) are disordered.

It belongs to the GrpE family. In terms of assembly, homodimer.

Its subcellular location is the cytoplasm. Participates actively in the response to hyperosmotic and heat shock by preventing the aggregation of stress-denatured proteins, in association with DnaK and GrpE. It is the nucleotide exchange factor for DnaK and may function as a thermosensor. Unfolded proteins bind initially to DnaJ; upon interaction with the DnaJ-bound protein, DnaK hydrolyzes its bound ATP, resulting in the formation of a stable complex. GrpE releases ADP from DnaK; ATP binding to DnaK triggers the release of the substrate protein, thus completing the reaction cycle. Several rounds of ATP-dependent interactions between DnaJ, DnaK and GrpE are required for fully efficient folding. The polypeptide is Protein GrpE (Bartonella tribocorum (strain CIP 105476 / IBS 506)).